Here is a 290-residue protein sequence, read N- to C-terminus: 4-hydroxy-3-methylbut-2-enyl diphosphate reductase (290 aa).

Cys12 contacts [4Fe-4S] cluster. His50 and His83 together coordinate (2E)-4-hydroxy-3-methylbut-2-enyl diphosphate. Residues His50 and His83 each coordinate dimethylallyl diphosphate. The isopentenyl diphosphate site is built by His50 and His83. Cys105 serves as a coordination point for [4Fe-4S] cluster. His133 contacts (2E)-4-hydroxy-3-methylbut-2-enyl diphosphate. His133 serves as a coordination point for dimethylallyl diphosphate. His133 lines the isopentenyl diphosphate pocket. The active-site Proton donor is the Glu135. Position 173 (Thr173) interacts with (2E)-4-hydroxy-3-methylbut-2-enyl diphosphate. A [4Fe-4S] cluster-binding site is contributed by Cys202. (2E)-4-hydroxy-3-methylbut-2-enyl diphosphate contacts are provided by Ser230, Asn232, and Ser274. Positions 230, 232, and 274 each coordinate dimethylallyl diphosphate. Residues Ser230, Asn232, and Ser274 each contribute to the isopentenyl diphosphate site.

The protein belongs to the IspH family. Requires [4Fe-4S] cluster as cofactor.

It catalyses the reaction isopentenyl diphosphate + 2 oxidized [2Fe-2S]-[ferredoxin] + H2O = (2E)-4-hydroxy-3-methylbut-2-enyl diphosphate + 2 reduced [2Fe-2S]-[ferredoxin] + 2 H(+). The enzyme catalyses dimethylallyl diphosphate + 2 oxidized [2Fe-2S]-[ferredoxin] + H2O = (2E)-4-hydroxy-3-methylbut-2-enyl diphosphate + 2 reduced [2Fe-2S]-[ferredoxin] + 2 H(+). It functions in the pathway isoprenoid biosynthesis; dimethylallyl diphosphate biosynthesis; dimethylallyl diphosphate from (2E)-4-hydroxy-3-methylbutenyl diphosphate: step 1/1. Its pathway is isoprenoid biosynthesis; isopentenyl diphosphate biosynthesis via DXP pathway; isopentenyl diphosphate from 1-deoxy-D-xylulose 5-phosphate: step 6/6. Functionally, catalyzes the conversion of 1-hydroxy-2-methyl-2-(E)-butenyl 4-diphosphate (HMBPP) into a mixture of isopentenyl diphosphate (IPP) and dimethylallyl diphosphate (DMAPP). Acts in the terminal step of the DOXP/MEP pathway for isoprenoid precursor biosynthesis. This is 4-hydroxy-3-methylbut-2-enyl diphosphate reductase from Nitratidesulfovibrio vulgaris (strain ATCC 29579 / DSM 644 / CCUG 34227 / NCIMB 8303 / VKM B-1760 / Hildenborough) (Desulfovibrio vulgaris).